The primary structure comprises 138 residues: Transcription antitermination protein NusB (138 aa).

This sequence belongs to the NusB family.

Its function is as follows. Involved in transcription antitermination. Required for transcription of ribosomal RNA (rRNA) genes. Binds specifically to the boxA antiterminator sequence of the ribosomal RNA (rrn) operons. The polypeptide is Transcription antitermination protein NusB (Helicobacter pylori (strain J99 / ATCC 700824) (Campylobacter pylori J99)).